Consider the following 284-residue polypeptide: Acetyl-coenzyme A carboxylase carboxyl transferase subunit beta (284 aa).

Residues 25 to 284 (MWVKCPGCSA…ILGILYRPAA (260 aa)) enclose the CoA carboxyltransferase N-terminal domain. Zn(2+)-binding residues include cysteine 29, cysteine 32, cysteine 48, and cysteine 51. The C4-type zinc-finger motif lies at 29–51 (CPGCSATLLAKDLDANLNVCPTC).

The protein belongs to the AccD/PCCB family. In terms of assembly, acetyl-CoA carboxylase is a heterohexamer composed of biotin carboxyl carrier protein (AccB), biotin carboxylase (AccC) and two subunits each of ACCase subunit alpha (AccA) and ACCase subunit beta (AccD). It depends on Zn(2+) as a cofactor.

It localises to the cytoplasm. It catalyses the reaction N(6)-carboxybiotinyl-L-lysyl-[protein] + acetyl-CoA = N(6)-biotinyl-L-lysyl-[protein] + malonyl-CoA. It functions in the pathway lipid metabolism; malonyl-CoA biosynthesis; malonyl-CoA from acetyl-CoA: step 1/1. Its function is as follows. Component of the acetyl coenzyme A carboxylase (ACC) complex. Biotin carboxylase (BC) catalyzes the carboxylation of biotin on its carrier protein (BCCP) and then the CO(2) group is transferred by the transcarboxylase to acetyl-CoA to form malonyl-CoA. The sequence is that of Acetyl-coenzyme A carboxylase carboxyl transferase subunit beta from Pelobacter propionicus (strain DSM 2379 / NBRC 103807 / OttBd1).